A 235-amino-acid polypeptide reads, in one-letter code: Thaumatin I (235 aa).

The N-terminal stretch at 1–22 is a signal peptide; that stretch reads MAATTCFFFLFPFLLLLTLSRA. 8 disulfides stabilise this stretch: C31–C226, C78–C88, C93–C99, C143–C215, C148–C199, C156–C167, C171–C180, and C181–C186. Residues 230–235 constitute a propeptide, removed in mature form; it reads LELEDE.

The protein belongs to the thaumatin family.

It is found in the cytoplasmic vesicle. Functionally, taste-modifying protein; intensely sweet-tasting. It is 100000 times sweeter than sucrose on a molar basis. This chain is Thaumatin I, found in Thaumatococcus daniellii (Katemfe).